Reading from the N-terminus, the 212-residue chain is Glycerol-3-phosphate acyltransferase (212 aa).

6 consecutive transmembrane segments (helical) span residues 6–26 (IAVL…GLIL), 56–76 (LAAL…LLAH), 92–112 (LTLI…WLGF), 122–142 (LGVS…AWLL), 150–170 (SSVG…FMPA), and 171–191 (SHEI…LLLW).

Belongs to the PlsY family. As to quaternary structure, probably interacts with PlsX.

The protein localises to the cell inner membrane. The catalysed reaction is an acyl phosphate + sn-glycerol 3-phosphate = a 1-acyl-sn-glycero-3-phosphate + phosphate. It participates in lipid metabolism; phospholipid metabolism. In terms of biological role, catalyzes the transfer of an acyl group from acyl-phosphate (acyl-PO(4)) to glycerol-3-phosphate (G3P) to form lysophosphatidic acid (LPA). This enzyme utilizes acyl-phosphate as fatty acyl donor, but not acyl-CoA or acyl-ACP. The polypeptide is Glycerol-3-phosphate acyltransferase (Zymomonas mobilis subsp. mobilis (strain ATCC 31821 / ZM4 / CP4)).